Consider the following 546-residue polypeptide: CTP synthase (546 aa).

An amidoligase domain region spans residues 1-266; sequence MTTNYIFVTG…DDLVCARFGI (266 aa). Ser14 lines the CTP pocket. Ser14 provides a ligand contact to UTP. Residues 15–20 and Asp72 each bind ATP; that span reads SLGKGI. 2 residues coordinate Mg(2+): Asp72 and Glu140. CTP contacts are provided by residues 147-149, 187-192, and Lys223; these read DIE and KTKPTQ. UTP-binding positions include 187–192 and Lys223; that span reads KTKPTQ. 239 to 241 serves as a coordination point for ATP; sequence KDV. The Glutamine amidotransferase type-1 domain maps to 291–542; sequence TIGMVGKYIE…VKAAGQNARG (252 aa). L-glutamine is bound at residue Gly352. The active-site Nucleophile; for glutamine hydrolysis is Cys379. Residues 380-383, Glu403, and Arg470 contribute to the L-glutamine site; that span reads LGMQ. Active-site residues include His515 and Glu517.

The protein belongs to the CTP synthase family. Homotetramer.

The enzyme catalyses UTP + L-glutamine + ATP + H2O = CTP + L-glutamate + ADP + phosphate + 2 H(+). It catalyses the reaction L-glutamine + H2O = L-glutamate + NH4(+). It carries out the reaction UTP + NH4(+) + ATP = CTP + ADP + phosphate + 2 H(+). It participates in pyrimidine metabolism; CTP biosynthesis via de novo pathway; CTP from UDP: step 2/2. With respect to regulation, allosterically activated by GTP, when glutamine is the substrate; GTP has no effect on the reaction when ammonia is the substrate. The allosteric effector GTP functions by stabilizing the protein conformation that binds the tetrahedral intermediate(s) formed during glutamine hydrolysis. Inhibited by the product CTP, via allosteric rather than competitive inhibition. Catalyzes the ATP-dependent amination of UTP to CTP with either L-glutamine or ammonia as the source of nitrogen. Regulates intracellular CTP levels through interactions with the four ribonucleotide triphosphates. The protein is CTP synthase of Vibrio campbellii (strain ATCC BAA-1116).